The chain runs to 257 residues: General L-amino acid transport ATP-binding protein AapP (257 aa).

One can recognise an ABC transporter domain in the interval 18 to 252; the sequence is VEIVNMNKWY…PQHERTKLFL (235 aa). 50–57 contacts ATP; the sequence is GPSGSGKS.

Belongs to the ABC transporter superfamily.

Its function is as follows. Part of a binding-protein-dependent transport system for L-amino acids, affects the uptake as well as the efflux of these amino acids. Probably responsible for energy coupling to the transport system. The protein is General L-amino acid transport ATP-binding protein AapP (aapP) of Rhizobium johnstonii (strain DSM 114642 / LMG 32736 / 3841) (Rhizobium leguminosarum bv. viciae).